The chain runs to 124 residues: FK506-binding protein 1 (124 aa).

The PPIase FKBP-type domain maps to 23 to 122; it reads GDTVTIHYDG…VFEVELLGVN (100 aa).

It belongs to the FKBP-type PPIase family. FKBP1 subfamily.

It localises to the cytoplasm. The enzyme catalyses [protein]-peptidylproline (omega=180) = [protein]-peptidylproline (omega=0). With respect to regulation, inhibited by rapamycin. Functionally, PPIases accelerate the folding of proteins. It catalyzes the cis-trans isomerization of proline imidic peptide bonds in oligopeptides. This chain is FK506-binding protein 1 (RBP1), found in Candida albicans (strain SC5314 / ATCC MYA-2876) (Yeast).